Consider the following 265-residue polypeptide: tRNA pseudouridine synthase A (265 aa).

D55 acts as the Nucleophile in catalysis. Substrate is bound at residue Y113.

The protein belongs to the tRNA pseudouridine synthase TruA family. Homodimer.

It catalyses the reaction uridine(38/39/40) in tRNA = pseudouridine(38/39/40) in tRNA. Its function is as follows. Formation of pseudouridine at positions 38, 39 and 40 in the anticodon stem and loop of transfer RNAs. This chain is tRNA pseudouridine synthase A, found in Levilactobacillus brevis (strain ATCC 367 / BCRC 12310 / CIP 105137 / JCM 1170 / LMG 11437 / NCIMB 947 / NCTC 947) (Lactobacillus brevis).